Here is an 82-residue protein sequence, read N- to C-terminus: uncharacterized protein (82 aa).

Positions Met-1–Ala-19 are cleaved as a signal peptide.

This is an uncharacterized protein from Rickettsia prowazekii (strain Madrid E).